The following is a 767-amino-acid chain: Photosystem I P700 chlorophyll a apoprotein A1 (767 aa).

Positions 1-22 (MTISPPESGEKDKKILESPVKA) are disordered. A compositionally biased stretch (basic and acidic residues) spans 8–22 (SGEKDKKILESPVKA). The next 8 helical transmembrane spans lie at 76-99 (IFSA…FHGA), 162-185 (LMAL…FHYH), 201-225 (LNHH…HIGA), 309-327 (VSHH…GHMY), 368-391 (RHAQ…HHMY), 407-433 (LGLF…IAMV), 455-477 (ALIS…LYIH), and 558-576 (LMIH…LILL). Cys600 and Cys609 together coordinate [4Fe-4S] cluster. The next 2 helical transmembrane spans lie at 616–637 (HVFL…HFSW) and 681–703 (ISMY…MFLF). Divinylchlorophyll a' is bound at residue His692. Divinyl chlorophyll a is bound by residues Met700 and Tyr708. Trp709 serves as a coordination point for phylloquinone. Residues 741–761 (AVGVTHFLVGGIATTWAFFHA) form a helical membrane-spanning segment.

It belongs to the PsaA/PsaB family. As to quaternary structure, the PsaA/B heterodimer binds the P700 divinyl chlorophyll special pair and subsequent electron acceptors. PSI consists of a core antenna complex that captures photons, and an electron transfer chain that converts photonic excitation into a charge separation. The cyanobacterial PSI reaction center is composed of one copy each of PsaA,B,C,D,E,F,I,J,K,L,M and X, and forms trimeric complexes. PSI electron transfer chain: 5 divinyl chlorophyll a, 1 divinyl chlorophyll a', 2 phylloquinones and 3 4Fe-4S clusters. PSI core antenna: 90 divinyl chlorophyll a, 22 carotenoids, 3 phospholipids and 1 galactolipid. P700 is a divinyl chlorophyll a/divinyl chlorophyll a' dimer, A0 is one or more divinyl chlorophyll a, A1 is one or both phylloquinones and FX is a shared 4Fe-4S iron-sulfur center. is required as a cofactor.

The protein localises to the cellular thylakoid membrane. The enzyme catalyses reduced [plastocyanin] + hnu + oxidized [2Fe-2S]-[ferredoxin] = oxidized [plastocyanin] + reduced [2Fe-2S]-[ferredoxin]. PsaA and PsaB bind P700, the primary electron donor of photosystem I (PSI), as well as the electron acceptors A0, A1 and FX. PSI is a plastocyanin/cytochrome c6-ferredoxin oxidoreductase, converting photonic excitation into a charge separation, which transfers an electron from the donor P700 chlorophyll pair to the spectroscopically characterized acceptors A0, A1, FX, FA and FB in turn. Oxidized P700 is reduced on the lumenal side of the thylakoid membrane by plastocyanin or cytochrome c6. The polypeptide is Photosystem I P700 chlorophyll a apoprotein A1 (Prochlorococcus marinus subsp. pastoris (strain CCMP1986 / NIES-2087 / MED4)).